The chain runs to 428 residues: Glutamyl-tRNA reductase (428 aa).

Residues 49 to 52 (TCNR), serine 109, 114 to 116 (EGQ), and glutamine 120 contribute to the substrate site. Residue cysteine 50 is the Nucleophile of the active site. 189–194 (GAGKMS) contacts NADP(+).

The protein belongs to the glutamyl-tRNA reductase family. Homodimer.

The enzyme catalyses (S)-4-amino-5-oxopentanoate + tRNA(Glu) + NADP(+) = L-glutamyl-tRNA(Glu) + NADPH + H(+). The protein operates within porphyrin-containing compound metabolism; protoporphyrin-IX biosynthesis; 5-aminolevulinate from L-glutamyl-tRNA(Glu): step 1/2. Its pathway is porphyrin-containing compound metabolism; chlorophyll biosynthesis. Catalyzes the NADPH-dependent reduction of glutamyl-tRNA(Glu) to glutamate 1-semialdehyde (GSA). The protein is Glutamyl-tRNA reductase of Trichormus variabilis (strain ATCC 29413 / PCC 7937) (Anabaena variabilis).